Consider the following 102-residue polypeptide: Large ribosomal subunit protein bL21 (102 aa).

It belongs to the bacterial ribosomal protein bL21 family. Part of the 50S ribosomal subunit. Contacts protein L20.

Its function is as follows. This protein binds to 23S rRNA in the presence of protein L20. The polypeptide is Large ribosomal subunit protein bL21 (Clavibacter sepedonicus (Clavibacter michiganensis subsp. sepedonicus)).